Here is a 185-residue protein sequence, read N- to C-terminus: Lipid A acyltransferase PagP (185 aa).

A signal peptide spans Met1 to Ala24. Active-site residues include His57, Asp100, and Ser101.

This sequence belongs to the lipid A palmitoyltransferase family. As to quaternary structure, homodimer.

The protein resides in the cell outer membrane. It catalyses the reaction a lipid A + a 1,2-diacyl-sn-glycero-3-phosphocholine = a hepta-acyl lipid A + a 2-acyl-sn-glycero-3-phosphocholine. The enzyme catalyses a lipid IVA + a 1,2-diacyl-sn-glycero-3-phosphocholine = a lipid IVB + a 2-acyl-sn-glycero-3-phosphocholine. The catalysed reaction is a lipid IIA + a 1,2-diacyl-sn-glycero-3-phosphocholine = a lipid IIB + a 2-acyl-sn-glycero-3-phosphocholine. Its function is as follows. Transfers a fatty acid residue from the sn-1 position of a phospholipid to the N-linked hydroxyfatty acid chain on the proximal unit of lipid A or its precursors. The protein is Lipid A acyltransferase PagP of Edwardsiella tarda (strain FL6-60).